Reading from the N-terminus, the 365-residue chain is DNA replication and repair protein RecF (365 aa).

30-37 lines the ATP pocket; it reads GENGQGKT.

The protein belongs to the RecF family.

It is found in the cytoplasm. Functionally, the RecF protein is involved in DNA metabolism; it is required for DNA replication and normal SOS inducibility. RecF binds preferentially to single-stranded, linear DNA. It also seems to bind ATP. The polypeptide is DNA replication and repair protein RecF (Desulfitobacterium hafniense (strain DSM 10664 / DCB-2)).